A 284-amino-acid chain; its full sequence is Rhomboid-type serine protease 2 (284 aa).

6 helical membrane-spanning segments follow: residues 17–37 (PPALTTGLIVFTFMLCVIKSV), 66–86 (FHVNFFHWICNIFTLATPLAV), 98–118 (VTLNLLTVIAALQYCIVGLIF), 124–141 (VIGLSGIAFSLMSYMAYH), 160–180 (IKLYTLYVPFVVAIVFMILFP), and 182–202 (SSLPGHLFGITTGYLLSYGYI). S128 acts as the Nucleophile in catalysis. Residue H187 is part of the active site.

The protein belongs to the peptidase S54 family.

The protein resides in the golgi apparatus membrane. Its subcellular location is the golgi apparatus. The protein localises to the cis-Golgi network membrane. The enzyme catalyses Cleaves type-1 transmembrane domains using a catalytic dyad composed of serine and histidine that are contributed by different transmembrane domains.. Probable rhomboid-type serine protease that catalyzes intramembrane proteolysis. This Candida albicans (strain SC5314 / ATCC MYA-2876) (Yeast) protein is Rhomboid-type serine protease 2 (RBD2).